Here is an 856-residue protein sequence, read N- to C-terminus: Inactive rhomboid protein 1 (856 aa).

A disordered region spans residues 1 to 20; that stretch reads MSEARRDSTSSLQRKKPPWL. Over 1-412 the chain is Cytoplasmic; it reads MSEARRDSTS…HRPFFTYWLT (412 aa). Phosphoserine is present on residues Ser-76 and Ser-176. Thr-180 and Thr-183 each carry phosphothreonine. Ser-391 carries the post-translational modification Phosphoserine. The helical transmembrane segment at 413–433 threads the bilayer; it reads FVHSLVTILAVCIYGIAPVGF. Over 434-656 the chain is Lumenal; it reads SQHETVDSVL…NPEVPDQFYR (223 aa). N-linked (GlcNAc...) asparagine glycosylation is present at Asn-584. The chain crosses the membrane as a helical span at residues 657-677; the sequence is LWLSLFLHAGILHCLVSVCFQ. Over 678-692 the chain is Cytoplasmic; that stretch reads MTVLRDLEKLAGWHR. A helical membrane pass occupies residues 693–713; sequence IAIIYLLSGVTGNLASAIFLP. Residues 714–715 lie on the Lumenal side of the membrane; sequence YR. The helical transmembrane segment at 716–736 threads the bilayer; that stretch reads AEVGPAGSQFGILACLFVELF. At 737–747 the chain is on the cytoplasmic side; that stretch reads QSWQILARPWR. The chain crosses the membrane as a helical span at residues 748–768; sequence AFFKLLAVVLFLFAFGLLPWI. The Lumenal portion of the chain corresponds to 769–773; the sequence is DNFAH. The chain crosses the membrane as a helical span at residues 774 to 794; sequence ISGFVSGLFLSFAFLPYISFG. The Cytoplasmic segment spans residues 795–804; the sequence is KFDLYRKRCQ. A helical transmembrane segment spans residues 805-825; sequence IIIFQAVFLGLLAGLVVLFYF. Topologically, residues 826-856 are lumenal; sequence YPVRCEWCEFLTCIPFTDKFCEKYELDAQLH.

Belongs to the peptidase S54 family. As to quaternary structure, homodimer, or homooligomer. Interacts with TGFA and HBEGF. Interacts with EGF; may retain EGF in the endoplasmic reticulum and regulates its degradation through the endoplasmic reticulum-associated degradation (ERAD). Interacts (via cytoplasmic N-terminus) with FRMD8/iTAP; this interaction leads to mutual protein stabilization. Interacts with ADAM17/TACE.

The protein resides in the endoplasmic reticulum membrane. It localises to the golgi apparatus membrane. Functionally, regulates ADAM17 protease, a sheddase of the epidermal growth factor (EGF) receptor ligands and TNF, thereby plays a role in sleep, cell survival, proliferation, migration and inflammation. Does not exhibit any protease activity on its own. This is Inactive rhomboid protein 1 (Rhbdf1) from Rattus norvegicus (Rat).